A 155-amino-acid polypeptide reads, in one-letter code: SsrA-binding protein (155 aa).

The segment at 135-155 (KRQDIKQRDVERETRREIMRH) is disordered.

Belongs to the SmpB family.

The protein localises to the cytoplasm. In terms of biological role, required for rescue of stalled ribosomes mediated by trans-translation. Binds to transfer-messenger RNA (tmRNA), required for stable association of tmRNA with ribosomes. tmRNA and SmpB together mimic tRNA shape, replacing the anticodon stem-loop with SmpB. tmRNA is encoded by the ssrA gene; the 2 termini fold to resemble tRNA(Ala) and it encodes a 'tag peptide', a short internal open reading frame. During trans-translation Ala-aminoacylated tmRNA acts like a tRNA, entering the A-site of stalled ribosomes, displacing the stalled mRNA. The ribosome then switches to translate the ORF on the tmRNA; the nascent peptide is terminated with the 'tag peptide' encoded by the tmRNA and targeted for degradation. The ribosome is freed to recommence translation, which seems to be the essential function of trans-translation. The chain is SsrA-binding protein from Oleidesulfovibrio alaskensis (strain ATCC BAA-1058 / DSM 17464 / G20) (Desulfovibrio alaskensis).